Reading from the N-terminus, the 542-residue chain is Homeobox protein ceh-18 (542 aa).

Polar residues predominate over residues 243–252 (NTPTQPTASL). A disordered region spans residues 243 to 264 (NTPTQPTASLTPKKAENRPPVV). In terms of domain architecture, POU-specific spans 290-364 (DDRIDMNELE…LLKEWLADVE (75 aa)). Positions 421 to 480 (RRRKRTNLDMNQRNALDTFFALNPRPDHDKMTDIANSLELDRDVVRVWFCNRRQKMRRVD) form a DNA-binding region, homeobox. The disordered stretch occupies residues 514–542 (LASCQASNDDSDGTSGSPDAPSNDGCSDL). Positions 517 to 530 (CQASNDDSDGTSGS) are enriched in polar residues.

Belongs to the POU transcription factor family. Interacts with akir-1. As to expression, expressed in the gonadal sheath cells that signal the oocyte, but not in the oocyte.

Its subcellular location is the nucleus. Functionally, directs gonadal sheath cell differentiation and function. Also directs gonad migration and plays a role in specifying the differentiated phenotypes of epidermal cells during postembryonic development. Plays a role in oogenesis, regulating a sheath cell signal that causes oocytes to maintain diakinesis arrest during meiosis. Negatively regulates oocyte maturation, ovulation and MAPK activation in oocytes when sperm are not available for fertilization. May be recruited by akir-1 to the promoter regions of antimicrobial peptide genes to control gene expression in response to fungal infection. This chain is Homeobox protein ceh-18, found in Caenorhabditis elegans.